Reading from the N-terminus, the 510-residue chain is Histidine ammonia-lyase (510 aa).

Positions 143-145 (ASG) form a cross-link, 5-imidazolinone (Ala-Gly). Position 144 is a 2,3-didehydroalanine (Ser) (Ser-144).

This sequence belongs to the PAL/histidase family. Post-translationally, contains an active site 4-methylidene-imidazol-5-one (MIO), which is formed autocatalytically by cyclization and dehydration of residues Ala-Ser-Gly.

The protein resides in the cytoplasm. It catalyses the reaction L-histidine = trans-urocanate + NH4(+). It functions in the pathway amino-acid degradation; L-histidine degradation into L-glutamate; N-formimidoyl-L-glutamate from L-histidine: step 1/3. This chain is Histidine ammonia-lyase, found in Shewanella pealeana (strain ATCC 700345 / ANG-SQ1).